Reading from the N-terminus, the 657-residue chain is Glycogen debranching enzyme (657 aa).

Aspartate 336 (nucleophile) is an active-site residue. The active-site Proton donor is the glutamate 371. Residues alanine 460–lysine 479 form a disordered region.

The protein belongs to the glycosyl hydrolase 13 family.

The enzyme catalyses Hydrolysis of (1-&gt;6)-alpha-D-glucosidic linkages to branches with degrees of polymerization of three or four glucose residues in limit dextrin.. It participates in glycan degradation; glycogen degradation. Its function is as follows. Removes maltotriose and maltotetraose chains that are attached by 1,6-alpha-linkage to the limit dextrin main chain, generating a debranched limit dextrin. The sequence is that of Glycogen debranching enzyme from Escherichia coli O6:K15:H31 (strain 536 / UPEC).